A 212-amino-acid chain; its full sequence is MASRRGALIVLEGVDRAGKTTQGLKLVTALCASGHRAELLRFPERSTEIGKLLNSYLEKKTELEDHSVHLLFSANRWEQVPLIKAKLNQGVTLVLDRYAFSGVAFTGAKENFSLDWCKQPDVGLPKPDLILFLQLQLLDAAARGEFGLERYETGTFQKQVLLCFQQLMEEKNLNWKVVDASKSIEEVHKEIRAHSEDAIRNAAQRPLGELWK.

Alanine 2 is subject to N-acetylalanine. Residues 16-21 and arginine 97 each bind ATP; that span reads RAGKTT. The tract at residues 133-157 is LID; it reads LQLQLLDAAARGEFGLERYETGTFQ. Residues lysine 182 and arginine 192 each coordinate ATP.

It belongs to the thymidylate kinase family. As to quaternary structure, homodimer. Mg(2+) serves as cofactor.

It carries out the reaction dTMP + ATP = dTDP + ADP. It functions in the pathway pyrimidine metabolism; dTTP biosynthesis. Functionally, catalyzes the phosphorylation of thymidine monophosphate (dTMP) to thymidine diphosphate (dTDP), the immediate precursor for the DNA building block dTTP, with ATP as the preferred phosphoryl donor in the presence of Mg(2+). The sequence is that of Thymidylate kinase (Dtymk) from Mus musculus (Mouse).